Consider the following 429-residue polypeptide: Gamma-glutamyl phosphate reductase (429 aa).

Belongs to the gamma-glutamyl phosphate reductase family.

The protein localises to the cytoplasm. It carries out the reaction L-glutamate 5-semialdehyde + phosphate + NADP(+) = L-glutamyl 5-phosphate + NADPH + H(+). It participates in amino-acid biosynthesis; L-proline biosynthesis; L-glutamate 5-semialdehyde from L-glutamate: step 2/2. Catalyzes the NADPH-dependent reduction of L-glutamate 5-phosphate into L-glutamate 5-semialdehyde and phosphate. The product spontaneously undergoes cyclization to form 1-pyrroline-5-carboxylate. The sequence is that of Gamma-glutamyl phosphate reductase from Nocardioides sp. (strain ATCC BAA-499 / JS614).